The chain runs to 157 residues: 2-C-methyl-D-erythritol 2,4-cyclodiphosphate synthase (157 aa).

Residues aspartate 8 and histidine 10 each coordinate a divalent metal cation. Residues 8–10 and 34–35 contribute to the 4-CDP-2-C-methyl-D-erythritol 2-phosphate site; these read DVH and HS. A divalent metal cation is bound at residue histidine 42. 4-CDP-2-C-methyl-D-erythritol 2-phosphate is bound by residues 56–58, 61–65, 132–135, phenylalanine 139, and arginine 142; these read DIG, FPDSD, and TTTE.

Belongs to the IspF family. In terms of assembly, homotrimer. The cofactor is a divalent metal cation.

The catalysed reaction is 4-CDP-2-C-methyl-D-erythritol 2-phosphate = 2-C-methyl-D-erythritol 2,4-cyclic diphosphate + CMP. Its pathway is isoprenoid biosynthesis; isopentenyl diphosphate biosynthesis via DXP pathway; isopentenyl diphosphate from 1-deoxy-D-xylulose 5-phosphate: step 4/6. In terms of biological role, involved in the biosynthesis of isopentenyl diphosphate (IPP) and dimethylallyl diphosphate (DMAPP), two major building blocks of isoprenoid compounds. Catalyzes the conversion of 4-diphosphocytidyl-2-C-methyl-D-erythritol 2-phosphate (CDP-ME2P) to 2-C-methyl-D-erythritol 2,4-cyclodiphosphate (ME-CPP) with a corresponding release of cytidine 5-monophosphate (CMP). The sequence is that of 2-C-methyl-D-erythritol 2,4-cyclodiphosphate synthase from Syntrophomonas wolfei subsp. wolfei (strain DSM 2245B / Goettingen).